We begin with the raw amino-acid sequence, 346 residues long: Tetraacyldisaccharide 4'-kinase (346 aa).

54 to 61 (TVGGAGKT) contacts ATP.

This sequence belongs to the LpxK family.

It catalyses the reaction a lipid A disaccharide + ATP = a lipid IVA + ADP + H(+). The protein operates within glycolipid biosynthesis; lipid IV(A) biosynthesis; lipid IV(A) from (3R)-3-hydroxytetradecanoyl-[acyl-carrier-protein] and UDP-N-acetyl-alpha-D-glucosamine: step 6/6. Its function is as follows. Transfers the gamma-phosphate of ATP to the 4'-position of a tetraacyldisaccharide 1-phosphate intermediate (termed DS-1-P) to form tetraacyldisaccharide 1,4'-bis-phosphate (lipid IVA). This chain is Tetraacyldisaccharide 4'-kinase, found in Rhizobium meliloti (strain 1021) (Ensifer meliloti).